The primary structure comprises 231 residues: tRNA (guanine-N(1)-)-methyltransferase (231 aa).

Residues Gly-112 and 132–137 (IGDYIL) contribute to the S-adenosyl-L-methionine site.

Belongs to the RNA methyltransferase TrmD family. As to quaternary structure, homodimer.

It localises to the cytoplasm. It catalyses the reaction guanosine(37) in tRNA + S-adenosyl-L-methionine = N(1)-methylguanosine(37) in tRNA + S-adenosyl-L-homocysteine + H(+). Functionally, specifically methylates guanosine-37 in various tRNAs. This chain is tRNA (guanine-N(1)-)-methyltransferase, found in Sulfurimonas denitrificans (strain ATCC 33889 / DSM 1251) (Thiomicrospira denitrificans (strain ATCC 33889 / DSM 1251)).